A 139-amino-acid polypeptide reads, in one-letter code: Large-conductance mechanosensitive channel (139 aa).

The next 2 membrane-spanning stretches (helical) occupy residues 19–39 (VAVI…ADVI) and 81–101 (GNFL…FMVV).

Belongs to the MscL family. Homopentamer.

The protein localises to the cell inner membrane. Its function is as follows. Channel that opens in response to stretch forces in the membrane lipid bilayer. May participate in the regulation of osmotic pressure changes within the cell. The protein is Large-conductance mechanosensitive channel of Nitrobacter hamburgensis (strain DSM 10229 / NCIMB 13809 / X14).